A 337-amino-acid chain; its full sequence is Adenine deaminase (337 aa).

Zn(2+) is bound by residues histidine 14, histidine 16, and histidine 194. The active-site Proton donor is glutamate 197. Residue aspartate 275 coordinates Zn(2+). Aspartate 276 contributes to the substrate binding site.

Belongs to the metallo-dependent hydrolases superfamily. Adenosine and AMP deaminases family. Adenine deaminase type 2 subfamily. Requires Zn(2+) as cofactor.

It carries out the reaction adenine + H2O + H(+) = hypoxanthine + NH4(+). In terms of biological role, catalyzes the hydrolytic deamination of adenine to hypoxanthine. Plays an important role in the purine salvage pathway and in nitrogen catabolism. In Vibrio parahaemolyticus serotype O3:K6 (strain RIMD 2210633), this protein is Adenine deaminase.